Reading from the N-terminus, the 655-residue chain is tRNA-guanine(15) transglycosylase (655 aa).

Asp-89 (nucleophile) is an active-site residue. Substrate-binding residues include Asp-124 and Ala-195. Zn(2+)-binding residues include Cys-281, Cys-283, and Cys-286. A PUA domain is found at 577 to 652; the sequence is KYRVVVNKEA…LAVKVRGGLK (76 aa).

This sequence belongs to the archaeosine tRNA-ribosyltransferase family. Requires Zn(2+) as cofactor.

The catalysed reaction is guanosine(15) in tRNA + 7-cyano-7-deazaguanine = 7-cyano-7-carbaguanosine(15) in tRNA + guanine. It functions in the pathway tRNA modification; archaeosine-tRNA biosynthesis. Functionally, exchanges the guanine residue with 7-cyano-7-deazaguanine (preQ0) at position 15 in the dihydrouridine loop (D-loop) of archaeal tRNAs. Can also utilize guanine as substrate. The protein is tRNA-guanine(15) transglycosylase of Methanocaldococcus jannaschii (strain ATCC 43067 / DSM 2661 / JAL-1 / JCM 10045 / NBRC 100440) (Methanococcus jannaschii).